A 182-amino-acid chain; its full sequence is Glycerol-3-phosphate acyltransferase 1 (182 aa).

Transmembrane regions (helical) follow at residues 5–25 (MQFL…AYIV), 54–74 (GYFI…VAVA), 81–101 (PTFV…PVLF), 117–137 (IAFD…FYLI), and 157–177 (ILYS…VLIL).

This sequence belongs to the PlsY family. In terms of assembly, probably interacts with PlsX.

It is found in the cell membrane. The catalysed reaction is an acyl phosphate + sn-glycerol 3-phosphate = a 1-acyl-sn-glycero-3-phosphate + phosphate. The protein operates within lipid metabolism; phospholipid metabolism. Catalyzes the transfer of an acyl group from acyl-phosphate (acyl-PO(4)) to glycerol-3-phosphate (G3P) to form lysophosphatidic acid (LPA). This enzyme utilizes acyl-phosphate as fatty acyl donor, but not acyl-CoA or acyl-ACP. This chain is Glycerol-3-phosphate acyltransferase 1, found in Bacillus cereus (strain ATCC 14579 / DSM 31 / CCUG 7414 / JCM 2152 / NBRC 15305 / NCIMB 9373 / NCTC 2599 / NRRL B-3711).